The primary structure comprises 78 residues: UPF0248 protein Msed_0897 (78 aa).

It belongs to the UPF0248 family.

The sequence is that of UPF0248 protein Msed_0897 from Metallosphaera sedula (strain ATCC 51363 / DSM 5348 / JCM 9185 / NBRC 15509 / TH2).